A 269-amino-acid polypeptide reads, in one-letter code: Probable ribosomal RNA small subunit methyltransferase A (269 aa).

S-adenosyl-L-methionine-binding residues include histidine 23, leucine 25, glycine 50, glutamate 71, aspartate 95, and asparagine 110.

It belongs to the class I-like SAM-binding methyltransferase superfamily. rRNA adenine N(6)-methyltransferase family. RsmA subfamily.

It localises to the cytoplasm. Functionally, specifically dimethylates two adjacent adenosines in the loop of a conserved hairpin near the 3'-end of 16S rRNA in the 30S particle. May play a critical role in biogenesis of 30S subunits. In Pyrococcus abyssi (strain GE5 / Orsay), this protein is Probable ribosomal RNA small subunit methyltransferase A.